The chain runs to 468 residues: 6-phospho-beta-galactosidase (468 aa).

Glutamine 19, histidine 116, asparagine 159, glutamate 160, and asparagine 297 together coordinate D-galactose 6-phosphate. Glutamate 160 acts as the Proton donor in catalysis. Glutamate 375 serves as the catalytic Nucleophile. D-galactose 6-phosphate is bound by residues serine 428, tryptophan 429, lysine 435, and tyrosine 437.

It belongs to the glycosyl hydrolase 1 family.

The catalysed reaction is a 6-phospho-beta-D-galactoside + H2O = D-galactose 6-phosphate + an alcohol. It functions in the pathway carbohydrate metabolism; lactose degradation; D-galactose 6-phosphate and beta-D-glucose from lactose 6-phosphate: step 1/1. In Streptococcus pyogenes serotype M12 (strain MGAS2096), this protein is 6-phospho-beta-galactosidase.